The sequence spans 613 residues: tRNA 5-methylaminomethyl-2-thiouridine biosynthesis bifunctional protein MnmC (613 aa).

A tRNA (mnm(5)s(2)U34)-methyltransferase region spans residues 1–225 (MKKAKLIFKD…KREMIKAYLE (225 aa)). Residues 252 to 613 (IGAGISSAVL…FLIRKLKKGL (362 aa)) are FAD-dependent cmnm(5)s(2)U34 oxidoreductase.

The protein in the N-terminal section; belongs to the methyltransferase superfamily. tRNA (mnm(5)s(2)U34)-methyltransferase family. It in the C-terminal section; belongs to the DAO family. FAD is required as a cofactor.

Its subcellular location is the cytoplasm. It carries out the reaction 5-aminomethyl-2-thiouridine(34) in tRNA + S-adenosyl-L-methionine = 5-methylaminomethyl-2-thiouridine(34) in tRNA + S-adenosyl-L-homocysteine + H(+). In terms of biological role, catalyzes the last two steps in the biosynthesis of 5-methylaminomethyl-2-thiouridine (mnm(5)s(2)U) at the wobble position (U34) in tRNA. Catalyzes the FAD-dependent demodification of cmnm(5)s(2)U34 to nm(5)s(2)U34, followed by the transfer of a methyl group from S-adenosyl-L-methionine to nm(5)s(2)U34, to form mnm(5)s(2)U34. The chain is tRNA 5-methylaminomethyl-2-thiouridine biosynthesis bifunctional protein MnmC from Campylobacter jejuni subsp. jejuni serotype O:6 (strain 81116 / NCTC 11828).